The primary structure comprises 612 residues: Indole-3-acetic acid-amido synthetase GH3.6 (612 aa).

The protein belongs to the IAA-amido conjugating enzyme family. In terms of tissue distribution, expressed in cotyledons, stipules, true leaves, hypocotyls, and all parts of the roots. Not detected in flowers.

Functionally, catalyzes the synthesis of indole-3-acetic acid (IAA)-amino acid conjugates, providing a mechanism for the plant to cope with the presence of excess auxin. Strongly reactive with Glu, Gln, Trp, Asp, Ala, Leu, Phe, Gly, Tyr, Met, Ile and Val. Little or no product formation with His, Ser, Thr, Arg, Lys, or Cys. Also active on pyruvic and butyric acid analogs of IAA, PAA and the synthetic auxin naphthaleneacetic acid (NAA). The two chlorinated synthetic auxin herbicides 2,4-D and 3,6-dichloro-o-anisic acid (dicamba) cannot be used as substrates. Involved in auxin signal transduction. Inhibits shoot and hypocotyl cell elongation, and lateral root cell differentiation in light. This Arabidopsis thaliana (Mouse-ear cress) protein is Indole-3-acetic acid-amido synthetase GH3.6 (GH3.6).